The sequence spans 178 residues: Fatty-acid and retinol-binding protein 1 (178 aa).

A signal peptide spans 1–16 (MYHQLILMALIGVIMA). 2 N-linked (GlcNAc...) asparagine glycosylation sites follow: Asn-44 and Asn-75. Coiled-coil stretches lie at residues 67-89 (DAAL…ELRN) and 122-154 (QKLD…LKAT). Asn-157 carries an N-linked (GlcNAc...) asparagine glycan.

The protein belongs to the fatty-acid and retinol-binding protein (FARBP) family. Post-translationally, N-glycosylated.

It localises to the secreted. Functionally, binds retinol and different fatty acids. The sequence is that of Fatty-acid and retinol-binding protein 1 from Onchocerca dukei (Filarial nematode worm).